A 156-amino-acid polypeptide reads, in one-letter code: MNLNATILGQAIAFVLFVLFCMKYVWPPLMASIEKRQKEIADGLASAERAKKDLDIAQAEATDHLKQAKVEAQAIIEQANKRKAQVVDEAKAEAEAERNKILAQAQAEIDAERKRAREELRKQVAMLALAGAEKIIERSVDDAANSDIVDKIVAEL.

Residues 11–31 (AIAFVLFVLFCMKYVWPPLMA) traverse the membrane as a helical segment.

Belongs to the ATPase B chain family. In terms of assembly, F-type ATPases have 2 components, F(1) - the catalytic core - and F(0) - the membrane proton channel. F(1) has five subunits: alpha(3), beta(3), gamma(1), delta(1), epsilon(1). F(0) has three main subunits: a(1), b(2) and c(10-14). The alpha and beta chains form an alternating ring which encloses part of the gamma chain. F(1) is attached to F(0) by a central stalk formed by the gamma and epsilon chains, while a peripheral stalk is formed by the delta and b chains.

Its subcellular location is the cell inner membrane. In terms of biological role, f(1)F(0) ATP synthase produces ATP from ADP in the presence of a proton or sodium gradient. F-type ATPases consist of two structural domains, F(1) containing the extramembraneous catalytic core and F(0) containing the membrane proton channel, linked together by a central stalk and a peripheral stalk. During catalysis, ATP synthesis in the catalytic domain of F(1) is coupled via a rotary mechanism of the central stalk subunits to proton translocation. Functionally, component of the F(0) channel, it forms part of the peripheral stalk, linking F(1) to F(0). The protein is ATP synthase subunit b of Sodalis glossinidius (strain morsitans).